Consider the following 450-residue polypeptide: MVRRKRQEEDEKIEIERVKEESLKLAKQAEEKRRLEESKEQGKRIQVDDDQLAKTTSKDKGQINHSKDVVEEDVNPPPSIDGKSEIGDGTSVNPRCLCCFHCHRPFVMHEILKKGKFHIDCYKEYYRNRNCYVCQQKIPVNAEGIRKFSEHPFWKEKYCPIHDEDGTAKCCSCERLEPRGTNYVMLGDFRWLCIECMGSAVMDTNEVQPLHFEIREFFEGLFLKVDKEFALLLVEKQALNKAEEEEKIDYHRAAVTRGLCMSEEQIVPSIIKGPRMGPDNQLITDIVTESQRVSGFEVTGILIIYGLPRLLTGYILAHEMMHAWLRLNGYKNLKLELEEGLCQALGLRWLESQTFASTDAAAAAAVASSSSFSSSTAPPAAITSKKSDDWSIFEKKLVEFCMNQIKEDDSPVYGLGFKQVYEMMVSNNYNIKDTLKDIVSASNATPDSTV.

A coiled-coil region spans residues 1-46; that stretch reads MVRRKRQEEDEKIEIERVKEESLKLAKQAEEKRRLEESKEQGKRIQ. 2 stretches are compositionally biased toward basic and acidic residues: residues 27 to 47 and 56 to 69; these read KQAEEKRRLEESKEQGKRIQV and TSKDKGQINHSKDV. The tract at residues 27-87 is disordered; that stretch reads KQAEEKRRLE…PSIDGKSEIG (61 aa).

This Arabidopsis thaliana (Mouse-ear cress) protein is Protein DA1-related 3 (DAR3).